We begin with the raw amino-acid sequence, 381 residues long: 3-dehydroquinate synthase (381 aa).

Residues 81-86 (EGEVSK), 115-119 (GVVGD), 139-140 (TS), Lys-152, and Lys-161 contribute to the NAD(+) site. Zn(2+) is bound by residues Glu-194, His-256, and His-274.

It belongs to the sugar phosphate cyclases superfamily. Dehydroquinate synthase family. Co(2+) serves as cofactor. The cofactor is Zn(2+). It depends on NAD(+) as a cofactor.

Its subcellular location is the cytoplasm. It catalyses the reaction 7-phospho-2-dehydro-3-deoxy-D-arabino-heptonate = 3-dehydroquinate + phosphate. It functions in the pathway metabolic intermediate biosynthesis; chorismate biosynthesis; chorismate from D-erythrose 4-phosphate and phosphoenolpyruvate: step 2/7. Catalyzes the conversion of 3-deoxy-D-arabino-heptulosonate 7-phosphate (DAHP) to dehydroquinate (DHQ). This Rhodopseudomonas palustris (strain BisA53) protein is 3-dehydroquinate synthase.